A 397-amino-acid chain; its full sequence is Tryptophan synthase beta chain (397 aa).

K87 bears the N6-(pyridoxal phosphate)lysine mark.

The protein belongs to the TrpB family. Tetramer of two alpha and two beta chains. The cofactor is pyridoxal 5'-phosphate.

It carries out the reaction (1S,2R)-1-C-(indol-3-yl)glycerol 3-phosphate + L-serine = D-glyceraldehyde 3-phosphate + L-tryptophan + H2O. It functions in the pathway amino-acid biosynthesis; L-tryptophan biosynthesis; L-tryptophan from chorismate: step 5/5. Functionally, the beta subunit is responsible for the synthesis of L-tryptophan from indole and L-serine. The polypeptide is Tryptophan synthase beta chain (Shigella boydii serotype 18 (strain CDC 3083-94 / BS512)).